Consider the following 543-residue polypeptide: Bifunctional purine biosynthesis protein PurH (543 aa).

The MGS-like domain occupies 5-151; the sequence is NHARPIRRAL…KNHKDVTIVV (147 aa).

Belongs to the PurH family.

It catalyses the reaction (6R)-10-formyltetrahydrofolate + 5-amino-1-(5-phospho-beta-D-ribosyl)imidazole-4-carboxamide = 5-formamido-1-(5-phospho-D-ribosyl)imidazole-4-carboxamide + (6S)-5,6,7,8-tetrahydrofolate. It carries out the reaction IMP + H2O = 5-formamido-1-(5-phospho-D-ribosyl)imidazole-4-carboxamide. It participates in purine metabolism; IMP biosynthesis via de novo pathway; 5-formamido-1-(5-phospho-D-ribosyl)imidazole-4-carboxamide from 5-amino-1-(5-phospho-D-ribosyl)imidazole-4-carboxamide (10-formyl THF route): step 1/1. The protein operates within purine metabolism; IMP biosynthesis via de novo pathway; IMP from 5-formamido-1-(5-phospho-D-ribosyl)imidazole-4-carboxamide: step 1/1. This is Bifunctional purine biosynthesis protein PurH from Shewanella oneidensis (strain ATCC 700550 / JCM 31522 / CIP 106686 / LMG 19005 / NCIMB 14063 / MR-1).